A 523-amino-acid chain; its full sequence is UDP-glucuronosyltransferase 3A2 (523 aa).

The N-terminal stretch at 1-22 (MAAHRRWLLMSFLFLEVILLEA) is a signal peptide. Topologically, residues 23 to 487 (AKILTISTLS…QPWHEQYMLD (465 aa)) are extracellular. A glycan (N-linked (GlcNAc...) asparagine) is linked at Asn52. Residues 488-508 (VFLFLLGLMLGTLWLSVKVLV) traverse the membrane as a helical segment. Over 509–523 (AVTRYLSIATKVKEA) the chain is Cytoplasmic.

It belongs to the UDP-glycosyltransferase family. As to expression, highly expressed in kidney, while it is expressed at low levels in liver. Not detected in other tissues examined.

The protein localises to the membrane. The catalysed reaction is glucuronate acceptor + UDP-alpha-D-glucuronate = acceptor beta-D-glucuronoside + UDP + H(+). UDP-glucuronosyltransferases catalyze phase II biotransformation reactions in which lipophilic substrates are conjugated with glucuronic acid to increase water solubility and enhance excretion. They are of major importance in the conjugation and subsequent elimination of potentially toxic xenobiotics and endogenous compounds. This chain is UDP-glucuronosyltransferase 3A2 (Ugt3a2), found in Mus musculus (Mouse).